A 263-amino-acid chain; its full sequence is Taurine import ATP-binding protein TauB (263 aa).

The region spanning 4 to 235 (LTAEAISLSF…RYAAGETVRS (232 aa)) is the ABC transporter domain. 40-47 (GPSGCGKS) lines the ATP pocket.

The protein belongs to the ABC transporter superfamily. Taurine importer (TC 3.A.1.17.1) family. As to quaternary structure, the complex is composed of two ATP-binding proteins (TauB), two transmembrane proteins (TauC) and a solute-binding protein (TauA).

The protein localises to the cell inner membrane. It carries out the reaction taurine(out) + ATP + H2O = taurine(in) + ADP + phosphate + H(+). Its function is as follows. Part of the ABC transporter complex TauABC involved in taurine import. Responsible for energy coupling to the transport system. The chain is Taurine import ATP-binding protein TauB from Pseudomonas aeruginosa (strain UCBPP-PA14).